The following is a 191-amino-acid chain: Cell division protein SepF (191 aa).

Residues 151-164 (SSSPEEASPSSVST) show a composition bias toward low complexity. The disordered stretch occupies residues 151 to 191 (SSSPEEASPSSVSTEKTPQYSLGKNTTPEPAWGNSKLSAYS). The span at 165–178 (EKTPQYSLGKNTTP) shows a compositional bias: polar residues.

The protein belongs to the SepF family. Homodimer. Interacts with FtsZ.

Its subcellular location is the cytoplasm. Functionally, cell division protein that is part of the divisome complex and is recruited early to the Z-ring. Probably stimulates Z-ring formation, perhaps through the cross-linking of FtsZ protofilaments. Its function overlaps with FtsA. The polypeptide is Cell division protein SepF (Prochlorococcus marinus (strain MIT 9301)).